Consider the following 284-residue polypeptide: 4-hydroxybenzoate octaprenyltransferase (284 aa).

8 consecutive transmembrane segments (helical) span residues 14–34, 41–61, 93–113, 134–154, 166–186, 209–229, 233–253, and 262–282; these read VHQP…LWIT, FIVL…GCVI, WVFF…NNII, YIYL…LIVY, WLLF…YAMV, IVIG…GIVE, IIFY…QQVL, and CLWA…GIVL.

It belongs to the UbiA prenyltransferase family. Mg(2+) is required as a cofactor.

It localises to the cell inner membrane. The enzyme catalyses all-trans-octaprenyl diphosphate + 4-hydroxybenzoate = 4-hydroxy-3-(all-trans-octaprenyl)benzoate + diphosphate. It functions in the pathway cofactor biosynthesis; ubiquinone biosynthesis. Functionally, catalyzes the prenylation of para-hydroxybenzoate (PHB) with an all-trans polyprenyl group. Mediates the second step in the final reaction sequence of ubiquinone-8 (UQ-8) biosynthesis, which is the condensation of the polyisoprenoid side chain with PHB, generating the first membrane-bound Q intermediate 3-octaprenyl-4-hydroxybenzoate. This chain is 4-hydroxybenzoate octaprenyltransferase, found in Blochmanniella floridana.